Reading from the N-terminus, the 480-residue chain is MAASAVCRAACSGTQVLLRTRRSPALLRLPALRGTATFAQALQSVPETQVSILDNGLRVASEQSSHATCTVGVWIDAGSRYETEKNNGAGYFLEHLAFKGTKNRPGNALEKEVESIGAHLNAYSTREHTAYLIKALSKDLPKVVELLADIVQNSSLEDSQIEKERDVILREMQENDASMQNVVFDYLHATAFQGTPLAQAVEGPSENVRRLSRTDLTDYLNRHYKAPRMVLAAAGGVEHQQLLDLAQKHLSSVSRVYEEDAVPGLTPCRFTGSEIRHRDDALPLAHVAIAVEGPGWANPDNVTLQVANAIIGHYDCTYGGGVHLSSPLASVAVANKLCQSFQTFNISYSDTGLLGAHFVCDAMSIDDMVFFLQGQWMRLCTSATESEVTRGKNILRNALVSHLDGTTPVCEDIGRSLLTYGRRIPLAEWESRIQEVDAQMLRDICSKYFYDQCPAVAGYGPIEQLPDYNRIRSGMFWLRF.

A mitochondrion-targeting transit peptide spans 1–34; the sequence is MAASAVCRAACSGTQVLLRTRRSPALLRLPALRG. 2 positions are modified to N6-acetyllysine: Lys111 and Lys138. Lys163 carries the N6-acetyllysine; alternate modification. At Lys163 the chain carries N6-succinyllysine; alternate. Ser212 carries the phosphoserine modification. A Phosphothreonine modification is found at Thr214. N6-acetyllysine is present on Lys248.

This sequence belongs to the peptidase M16 family. UQCRC1/QCR1 subfamily. In terms of assembly, component of the ubiquinol-cytochrome c oxidoreductase (cytochrome b-c1 complex, complex III, CIII), a multisubunit enzyme composed of 11 subunits. The complex is composed of 3 respiratory subunits cytochrome b, cytochrome c1 and Rieske protein UQCRFS1, 2 core protein subunits UQCRC1/QCR1 and UQCRC2/QCR2, and 6 low-molecular weight protein subunits UQCRH/QCR6, UQCRB/QCR7, UQCRQ/QCR8, UQCR10/QCR9, UQCR11/QCR10 and subunit 9, the cleavage product of Rieske protein UQCRFS1. The complex exists as an obligatory dimer and forms supercomplexes (SCs) in the inner mitochondrial membrane with NADH-ubiquinone oxidoreductase (complex I, CI) and cytochrome c oxidase (complex IV, CIV), resulting in different assemblies (supercomplex SCI(1)III(2)IV(1) and megacomplex MCI(2)III(2)IV(2)). Interacts with UQCC6. Interacts with STMP1. Post-translationally, acetylation of Lys-138 is observed in liver mitochondria from fasted mice but not from fed mice. As to expression, expressed in neurons and astrocytes of the cerebral cortex and hippocampus (at protein level).

The protein localises to the mitochondrion inner membrane. Its function is as follows. Component of the ubiquinol-cytochrome c oxidoreductase, a multisubunit transmembrane complex that is part of the mitochondrial electron transport chain which drives oxidative phosphorylation. The respiratory chain contains 3 multisubunit complexes succinate dehydrogenase (complex II, CII), ubiquinol-cytochrome c oxidoreductase (cytochrome b-c1 complex, complex III, CIII) and cytochrome c oxidase (complex IV, CIV), that cooperate to transfer electrons derived from NADH and succinate to molecular oxygen, creating an electrochemical gradient over the inner membrane that drives transmembrane transport and the ATP synthase. The cytochrome b-c1 complex catalyzes electron transfer from ubiquinol to cytochrome c, linking this redox reaction to translocation of protons across the mitochondrial inner membrane, with protons being carried across the membrane as hydrogens on the quinol. In the process called Q cycle, 2 protons are consumed from the matrix, 4 protons are released into the intermembrane space and 2 electrons are passed to cytochrome c. The 2 core subunits UQCRC1/QCR1 and UQCRC2/QCR2 are homologous to the 2 mitochondrial-processing peptidase (MPP) subunits beta-MPP and alpha-MPP respectively, and they seem to have preserved their MPP processing properties. May be involved in the in situ processing of UQCRFS1 into the mature Rieske protein and its mitochondrial targeting sequence (MTS)/subunit 9 when incorporated into complex III. Seems to play an important role in the maintenance of proper mitochondrial function in nigral dopaminergic neurons. The chain is Cytochrome b-c1 complex subunit 1, mitochondrial (Uqcrc1) from Mus musculus (Mouse).